Here is a 290-residue protein sequence, read N- to C-terminus: HTH-type transcriptional activator RhaR (290 aa).

The HTH araC/xylS-type domain maps to 179–277; the sequence is DLIMSALQQS…GMTPRDYRQR (99 aa). 2 consecutive DNA-binding regions (H-T-H motif) follow at residues 196 to 217 and 244 to 267; these read ANFC…RQQT and ISDI…TREA.

As to quaternary structure, binds DNA as a dimer.

It is found in the cytoplasm. In terms of biological role, activates expression of the rhaSR operon in response to L-rhamnose. This is HTH-type transcriptional activator RhaR from Yersinia pseudotuberculosis serotype O:3 (strain YPIII).